Consider the following 178-residue polypeptide: ATP synthase subunit delta (178 aa).

Belongs to the ATPase delta chain family. F-type ATPases have 2 components, F(1) - the catalytic core - and F(0) - the membrane proton channel. F(1) has five subunits: alpha(3), beta(3), gamma(1), delta(1), epsilon(1). F(0) has three main subunits: a(1), b(2) and c(10-14). The alpha and beta chains form an alternating ring which encloses part of the gamma chain. F(1) is attached to F(0) by a central stalk formed by the gamma and epsilon chains, while a peripheral stalk is formed by the delta and b chains.

It is found in the cell inner membrane. In terms of biological role, f(1)F(0) ATP synthase produces ATP from ADP in the presence of a proton or sodium gradient. F-type ATPases consist of two structural domains, F(1) containing the extramembraneous catalytic core and F(0) containing the membrane proton channel, linked together by a central stalk and a peripheral stalk. During catalysis, ATP synthesis in the catalytic domain of F(1) is coupled via a rotary mechanism of the central stalk subunits to proton translocation. Functionally, this protein is part of the stalk that links CF(0) to CF(1). It either transmits conformational changes from CF(0) to CF(1) or is implicated in proton conduction. The polypeptide is ATP synthase subunit delta (Cellvibrio japonicus (strain Ueda107) (Pseudomonas fluorescens subsp. cellulosa)).